A 183-amino-acid polypeptide reads, in one-letter code: Peptide deformylase (183 aa).

Fe cation-binding residues include cysteine 110 and histidine 153. Glutamate 154 is a catalytic residue. A Fe cation-binding site is contributed by histidine 157.

This sequence belongs to the polypeptide deformylase family. It depends on Fe(2+) as a cofactor.

It catalyses the reaction N-terminal N-formyl-L-methionyl-[peptide] + H2O = N-terminal L-methionyl-[peptide] + formate. In terms of biological role, removes the formyl group from the N-terminal Met of newly synthesized proteins. Requires at least a dipeptide for an efficient rate of reaction. N-terminal L-methionine is a prerequisite for activity but the enzyme has broad specificity at other positions. The chain is Peptide deformylase from Listeria monocytogenes serotype 4a (strain HCC23).